Consider the following 738-residue polypeptide: MATKFPSFSQGLAQDPTTRRIWYGIATAHDFESHDGMTEEKLYQKLFSTHFGHLAIIGLWVSGNLFHIAWQGNFEQWVSDPLHVRPIAHAIWDPHFGQGAIDAFTQAGASSPVNIAYSGLYHWFYTIGMTTNAELYQGSIFMMILSAWALFAGWLHLQPKFRPSLAWFKNAESRLNHHLAVLFGFSSIAWTGHLVHVAIPESRGQHVGWDNFLSVMPHPAGLGPFFTGNWGVYAQNPDTTGQIFGTAEGSGTAILTFLGGFHPQTEALWLTDIAHHHLAIGVIFVIAGHMYRTNFGIGHSIREILEAHNPPTGTPGDLGAGHKGLYDTINNSLHFQLGLALASLGVITSLVAQHMYAMPSYAFIAKDYTTQAALYTHHQYIAIALMCGAFAHGAIFFIRDYDPEANKDNVLGRMLEHKEAIISHLSWVSLFLGFHTLGLYVHNDVVVAFGTPEKQILVEPVFAQFVQAASGKAIYGFDVLLANAGGAAANANAAYMGGWMDAINGVRGSNDLFLPIGPGDFLVHHAIALGLHTTTLILVKGALDARGSKLMPDKKDFGYSFPCDGPGRGGTCDISAWDAFYLAVFWALNTVGWVTFYWHWKHLAIWQGNVAQFNESSTYLMGWFRDYLWLNSSQLINGYNPFGSNNLAVWSWMFLFGHLVWATGFMFLISWRGYWQELIETIVWAHERSPIANMMGWRDKPVALSIVQARVVGLAHFTVGYVLTYGAFLIASTSGKFG.

8 consecutive transmembrane segments (helical) span residues 46–69, 135–158, 175–199, 273–291, 333–356, 372–398, 420–442, and 521–539; these read LFST…FHIA, LYQG…LHLQ, LNHH…HVAI, IAHH…GHMY, LHFQ…QHMY, AALY…IFFI, AIIS…LYVH, and FLVH…LILV. 2 residues coordinate [4Fe-4S] cluster: Cys-563 and Cys-572. 2 consecutive transmembrane segments (helical) span residues 579-600 and 647-669; these read AFYL…YWHW and LAVW…MFLI. Chlorophyll a is bound by residues His-658, Met-666, and Tyr-674. A phylloquinone-binding site is contributed by Trp-675. A helical transmembrane segment spans residues 711-731; that stretch reads VVGLAHFTVGYVLTYGAFLIA.

Belongs to the PsaA/PsaB family. As to quaternary structure, the PsaA/B heterodimer binds the P700 chlorophyll special pair and subsequent electron acceptors. PSI consists of a core antenna complex that captures photons, and an electron transfer chain that converts photonic excitation into a charge separation. The cyanobacterial PSI reaction center is composed of one copy each of PsaA,B,C,D,E,F,I,J,K,L,M and X, and forms trimeric complexes. The cofactor is PSI electron transfer chain: 5 chlorophyll a, 1 chlorophyll a', 2 phylloquinones and 3 4Fe-4S clusters. PSI core antenna: 90 chlorophyll a, 22 carotenoids, 3 phospholipids and 1 galactolipid. P700 is a chlorophyll a/chlorophyll a' dimer, A0 is one or more chlorophyll a, A1 is one or both phylloquinones and FX is a shared 4Fe-4S iron-sulfur center..

The protein localises to the cellular thylakoid membrane. It carries out the reaction reduced [plastocyanin] + hnu + oxidized [2Fe-2S]-[ferredoxin] = oxidized [plastocyanin] + reduced [2Fe-2S]-[ferredoxin]. Functionally, psaA and PsaB bind P700, the primary electron donor of photosystem I (PSI), as well as the electron acceptors A0, A1 and FX. PSI is a plastocyanin/cytochrome c6-ferredoxin oxidoreductase, converting photonic excitation into a charge separation, which transfers an electron from the donor P700 chlorophyll pair to the spectroscopically characterized acceptors A0, A1, FX, FA and FB in turn. Oxidized P700 is reduced on the lumenal side of the thylakoid membrane by plastocyanin or cytochrome c6. The protein is Photosystem I P700 chlorophyll a apoprotein A2 of Synechococcus sp. (strain CC9311).